Here is a 240-residue protein sequence, read N- to C-terminus: Phosphoribosylaminoimidazole-succinocarboxamide synthase (240 aa).

The protein belongs to the SAICAR synthetase family.

The catalysed reaction is 5-amino-1-(5-phospho-D-ribosyl)imidazole-4-carboxylate + L-aspartate + ATP = (2S)-2-[5-amino-1-(5-phospho-beta-D-ribosyl)imidazole-4-carboxamido]succinate + ADP + phosphate + 2 H(+). It functions in the pathway purine metabolism; IMP biosynthesis via de novo pathway; 5-amino-1-(5-phospho-D-ribosyl)imidazole-4-carboxamide from 5-amino-1-(5-phospho-D-ribosyl)imidazole-4-carboxylate: step 1/2. This Neorickettsia sennetsu (strain ATCC VR-367 / Miyayama) (Ehrlichia sennetsu) protein is Phosphoribosylaminoimidazole-succinocarboxamide synthase.